A 119-amino-acid chain; its full sequence is Multidrug resistance protein EbrB (119 aa).

The next 4 membrane-spanning stretches (helical) occupy residues 3 to 23 (GMIF…MLKL), 31 to 51 (LPAA…SFSL), 59 to 79 (AYAT…HFIF), and 81 to 101 (EPFN…VFLL).

It belongs to the drug/metabolite transporter (DMT) superfamily. Small multidrug resistance (SMR) (TC 2.A.7.1) family. EbrA/EbrB subfamily. In terms of assembly, the efflux pump is composed of EbrA and EbrB.

Its subcellular location is the cell membrane. In terms of biological role, part of a multidrug efflux pump. Confers resistance to cationic lipophilic dyes such as ethidium bromide, acriflavine, pyronine Y and safranin O. The efflux is probably coupled to an influx of protons. The polypeptide is Multidrug resistance protein EbrB (ebrB) (Bacillus licheniformis (strain ATCC 14580 / DSM 13 / JCM 2505 / CCUG 7422 / NBRC 12200 / NCIMB 9375 / NCTC 10341 / NRRL NRS-1264 / Gibson 46)).